The sequence spans 508 residues: UDP-N-acetylmuramoylalanine--D-glutamate ligase (508 aa).

138–144 (GTNGKTT) contacts ATP. The disordered stretch occupies residues 294–314 (FDEPAPRRKKDAPPPTRAGGR).

Belongs to the MurCDEF family.

The protein localises to the cytoplasm. It carries out the reaction UDP-N-acetyl-alpha-D-muramoyl-L-alanine + D-glutamate + ATP = UDP-N-acetyl-alpha-D-muramoyl-L-alanyl-D-glutamate + ADP + phosphate + H(+). Its pathway is cell wall biogenesis; peptidoglycan biosynthesis. Cell wall formation. Catalyzes the addition of glutamate to the nucleotide precursor UDP-N-acetylmuramoyl-L-alanine (UMA). The polypeptide is UDP-N-acetylmuramoylalanine--D-glutamate ligase (Bordetella parapertussis (strain 12822 / ATCC BAA-587 / NCTC 13253)).